Reading from the N-terminus, the 198-residue chain is Superoxide dismutase [Fe] (198 aa).

Fe cation contacts are provided by His27, His74, Asp158, and His162.

It belongs to the iron/manganese superoxide dismutase family. As to quaternary structure, homodimer. The cofactor is Fe cation.

Its subcellular location is the cytoplasm. The catalysed reaction is 2 superoxide + 2 H(+) = H2O2 + O2. Functionally, destroys superoxide anion radicals which are normally produced within the cells and which are toxic to biological systems. The sequence is that of Superoxide dismutase [Fe] (SODB) from Plasmodium falciparum (isolate 3D7).